The following is a 71-amino-acid chain: Long neurotoxin 3 (71 aa).

Disulfide bonds link C3/C20, C14/C41, C26/C30, C45/C56, and C57/C62.

It belongs to the three-finger toxin family. Long-chain subfamily. Type II alpha-neurotoxin sub-subfamily. As to expression, expressed by the venom gland.

It is found in the secreted. Binds with high affinity to muscular (alpha-1/CHRNA1) and neuronal (alpha-7/CHRNA7) nicotinic acetylcholine receptor (nAChR) and inhibits acetylcholine from binding to the receptor, thereby impairing neuromuscular and neuronal transmission. This chain is Long neurotoxin 3, found in Naja naja (Indian cobra).